Consider the following 89-residue polypeptide: Large ribosomal subunit protein bL27 (89 aa).

A disordered region spans residues 1 to 26; that stretch reads MAHKKGVGSSRNGRDSESKRLGVKEG. The span at 12–26 shows a compositional bias: basic and acidic residues; that stretch reads NGRDSESKRLGVKEG.

Belongs to the bacterial ribosomal protein bL27 family.

The chain is Large ribosomal subunit protein bL27 from Desulforamulus reducens (strain ATCC BAA-1160 / DSM 100696 / MI-1) (Desulfotomaculum reducens).